Consider the following 198-residue polypeptide: tRNA (pseudouridine(54)-N(1))-methyltransferase (198 aa).

Leucine 128 contacts S-adenosyl-L-methionine.

The protein belongs to the methyltransferase superfamily. TrmY family. In terms of assembly, homodimer.

It is found in the cytoplasm. It catalyses the reaction pseudouridine(54) in tRNA + S-adenosyl-L-methionine = N(1)-methylpseudouridine(54) in tRNA + S-adenosyl-L-homocysteine + H(+). In terms of biological role, specifically catalyzes the N1-methylation of pseudouridine at position 54 (Psi54) in tRNAs. The polypeptide is tRNA (pseudouridine(54)-N(1))-methyltransferase (Natronomonas pharaonis (strain ATCC 35678 / DSM 2160 / CIP 103997 / JCM 8858 / NBRC 14720 / NCIMB 2260 / Gabara) (Halobacterium pharaonis)).